Here is a 463-residue protein sequence, read N- to C-terminus: tRNA (guanine(10)-N(2))-methyltransferase TRMT11 (463 aa).

A2 carries the post-translational modification N-acetylalanine.

This sequence belongs to the class I-like SAM-binding methyltransferase superfamily. TRM11 methyltransferase family. As to quaternary structure, part of the heterodimeric TRMT11-TRM112 methyltransferase complex; this complex forms an active tRNA methyltransferase, where TRMT112 acts as an activator of the catalytic subunit TRMT11.

Its subcellular location is the cytoplasm. It carries out the reaction guanosine(10) in tRNA + S-adenosyl-L-methionine = N(2)-methylguanosine(10) in tRNA + S-adenosyl-L-homocysteine + H(+). Its function is as follows. Catalytic subunit of the TRMT11-TRM112 methyltransferase complex, that specifically mediates the S-adenosyl-L-methionine-dependent N(2)-methylation of guanosine nucleotide at position 10 (m2G10) in tRNAs. This is one of the major tRNA (guanine-N(2))-methyltransferases. The sequence is that of tRNA (guanine(10)-N(2))-methyltransferase TRMT11 from Rattus norvegicus (Rat).